A 252-amino-acid chain; its full sequence is Chaplin-A (252 aa).

The signal sequence occupies residues 1–20 (MVAAAAATGILSLCGSPALA). One can recognise a Chaplin 1 domain in the interval 31-71 (SPGAVSGNALQVPVDVPVNACGNTVDVIAALNPAFGNECEN). Disordered regions lie at residues 71–121 (NASD…GNNA) and 150–224 (CEND…GSEG). A compositionally biased stretch (low complexity) spans 86–108 (EDASSSSSSSTSASSSGSHADGA). The Chaplin 2 domain occupies 112-152 (SPGVGSGNNAQVPVDVPVNLCGNTVDVIAALNPVFGNKCEN). Over residues 153 to 165 (DAEEPPGYGEEEP) the composition is skewed to acidic residues. Residues 210 to 224 (QTEQPPALAETGSEG) are compositionally biased toward low complexity. The LPXTG sorting signal motif lies at 217–221 (LAETG). Propeptides (removed by sortase) lie at residues 219–252 (ETGS…LSGR) and 221–252 (GSEG…LSGR). A Pentaglycyl murein peptidoglycan amidated threonine modification is found at Thr220.

It belongs to the chaplin family. Long chaplin subfamily.

The protein localises to the secreted. It is found in the cell wall. Functionally, one of 8 partially redundant surface-active proteins required for efficient formation of aerial mycelium; the short chaplins assemble into a hydrophobic, amyloidal fibrillar surface layer that envelopes and protects aerial hyphae and spores, presumably anchored to the long chaplins. Chaplins have an overlapping function with the surface-active SapB peptide; chaplins are essential on minimal medium while on rich medium both chaplins and SapB are required for efficient aerial hyphae formation. A minimal chaplin strain capable of forming aerial mycelium/hyphae on minimal medium contains ChpC, ChpE and ChpH. The strain also has restored rodlet formation on the hyphae surface. A second minimal chaplin strain with ChpA, ChpD and ChpE makes slightly less robust hyphae. The long chaplins (ChpA, ChpB, ChpC) are not absolutely necessary for short chaplin localization or rodlet formation, but probably play a role in initiating aerial hyphae development. Chaplins are also involved in cell attachment to a hydrophobic surface. The chain is Chaplin-A from Streptomyces coelicolor (strain ATCC BAA-471 / A3(2) / M145).